The sequence spans 69 residues: MKKDTKTARSAVTGKFVTQPIGGKKAAKFAQVEGLKMNAASKALSEKLTASGLKGDAYRSEIVKAFKKG.

This is an uncharacterized protein from Sinorhizobium fredii (strain NBRC 101917 / NGR234).